The chain runs to 427 residues: 3-phosphoshikimate 1-carboxyvinyltransferase (427 aa).

3-phosphoshikimate-binding residues include Lys22, Ser23, and Arg27. Position 22 (Lys22) interacts with phosphoenolpyruvate. Phosphoenolpyruvate is bound by residues Gly96 and Arg124. 7 residues coordinate 3-phosphoshikimate: Ser169, Ser170, Gln171, Ser197, Asp313, Asn336, and Lys340. A phosphoenolpyruvate-binding site is contributed by Gln171. The Proton acceptor role is filled by Asp313. Arg344, Arg386, and Lys411 together coordinate phosphoenolpyruvate.

This sequence belongs to the EPSP synthase family. As to quaternary structure, monomer.

The protein resides in the cytoplasm. It catalyses the reaction 3-phosphoshikimate + phosphoenolpyruvate = 5-O-(1-carboxyvinyl)-3-phosphoshikimate + phosphate. It functions in the pathway metabolic intermediate biosynthesis; chorismate biosynthesis; chorismate from D-erythrose 4-phosphate and phosphoenolpyruvate: step 6/7. Functionally, catalyzes the transfer of the enolpyruvyl moiety of phosphoenolpyruvate (PEP) to the 5-hydroxyl of shikimate-3-phosphate (S3P) to produce enolpyruvyl shikimate-3-phosphate and inorganic phosphate. This chain is 3-phosphoshikimate 1-carboxyvinyltransferase, found in Salmonella paratyphi A (strain ATCC 9150 / SARB42).